A 64-amino-acid polypeptide reads, in one-letter code: Tracheal antimicrobial peptide (64 aa).

A signal peptide spans 1–26; sequence MRLHHLLLALLFLVLSAWSGFTQGVG. 3 cysteine pairs are disulfide-bonded: Cys31–Cys60, Cys38–Cys53, and Cys43–Cys61.

The protein belongs to the beta-defensin family. LAP/TAP subfamily. Tracheal epithelium.

Its subcellular location is the secreted. Has antibacterial activity in vitro against Escherichia coli, Staphylococcus aureus, Klebsiella pneumonia, and Pseudomonas aeruginosa. In addition, the peptide is active against Candida albicans, indicating a broad spectrum of activity. The sequence is that of Tracheal antimicrobial peptide from Bos taurus (Bovine).